A 72-amino-acid chain; its full sequence is MAKEDVIEMQGTVQDTLPNTMFRVELENGHVVTAHISGKMRKNYIRILTGDKVTVELTPYDLSKGRIVFRAR.

The 72-residue stretch at 1–72 folds into the S1-like domain; sequence MAKEDVIEMQ…SKGRIVFRAR (72 aa).

Belongs to the IF-1 family. Component of the 30S ribosomal translation pre-initiation complex which assembles on the 30S ribosome in the order IF-2 and IF-3, IF-1 and N-formylmethionyl-tRNA(fMet); mRNA recruitment can occur at any time during PIC assembly.

It is found in the cytoplasm. In terms of biological role, one of the essential components for the initiation of protein synthesis. Stabilizes the binding of IF-2 and IF-3 on the 30S subunit to which N-formylmethionyl-tRNA(fMet) subsequently binds. Helps modulate mRNA selection, yielding the 30S pre-initiation complex (PIC). Upon addition of the 50S ribosomal subunit IF-1, IF-2 and IF-3 are released leaving the mature 70S translation initiation complex. The chain is Translation initiation factor IF-1 from Photobacterium profundum (strain SS9).